Here is a 540-residue protein sequence, read N- to C-terminus: Cobalt-factor III methyltransferase (540 aa).

Residues C402, C405, C439, and C443 each contribute to the [4Fe-4S] cluster site.

This sequence in the N-terminal section; belongs to the precorrin methyltransferase family. Requires [4Fe-4S] cluster as cofactor.

It catalyses the reaction Co(II)-factor III + AH2 + S-adenosyl-L-methionine = Co-precorrin-4 + A + S-adenosyl-L-homocysteine. It functions in the pathway cofactor biosynthesis; adenosylcobalamin biosynthesis. Functionally, methyltransferase that catalyzes the reduction, ring contraction and methylation of C-17 in cobalt-factor III to form cobalt-precorrin-4. Is also able to convert cobalt-precorrin-3 to cobalt-precorrin-4. This chain is Cobalt-factor III methyltransferase (cbiH60), found in Priestia megaterium (Bacillus megaterium).